An 85-amino-acid chain; its full sequence is Elicitor peptide 7 (85 aa).

Positions 1 to 62 are excised as a propeptide; it reads MEGEGRREDG…TEVVNIPRSV (62 aa). The disordered stretch occupies residues 66 to 85; that stretch reads NVAARKGKQQTSSGKGGGTN.

This sequence belongs to the brassicaceae elicitor peptide family.

Its function is as follows. Elicitor of plant defense. The polypeptide is Elicitor peptide 7 (PEP7) (Arabidopsis thaliana (Mouse-ear cress)).